Reading from the N-terminus, the 449-residue chain is MGRYFGTSGIRGLFNECVTPELALKVGKAVGTYLGGGRVVVGMDTRTSSETLKSALISGLLSTGVEVIDIGLAPTPLTGFAIKLYEADAGVTITASHNPPEYNGIKVWQSNGMAYTPDMEAELERILESGNFRKVPWNEIGTLRRADPREEYIRKALEMVKLNDSYTVVVDSGNGAGSILSPYLQRELGNKVISLNSHPSGFFVRELEPNAKSLSGLAKTVRVMKADVGIAHDGDADRIGVVDDEGNFVEYEVMLSLIAGYMLRKFGKGKIVTTVDAGFALDDYVRPLGGEVIRTRVGDVAVADELAKHGGIFGGEPSGTWIIPQWNLTPDGIFAGALVLEMIDRLGPISELAREVPRYVTLRAKVPCPNEKKAKAMEIIAKEALKSFDYEKLIDIDGIRIENSDWWILFRPSGTEPIMRITLEAHTEDKAKELMEKAEKLVKEAVRRA.

Residue Ser96 is the Phosphoserine intermediate of the active site. Residues Ser96, Asp233, Asp235, and Asp237 each contribute to the Mg(2+) site. Ser96 carries the phosphoserine modification.

It belongs to the phosphohexose mutase family. Mg(2+) is required as a cofactor. Activated by phosphorylation.

It carries out the reaction alpha-D-glucosamine 1-phosphate = D-glucosamine 6-phosphate. Catalyzes the conversion of glucosamine-6-phosphate to glucosamine-1-phosphate. The polypeptide is Probable phosphoglucosamine mutase (Thermococcus gammatolerans (strain DSM 15229 / JCM 11827 / EJ3)).